Here is a 335-residue protein sequence, read N- to C-terminus: Probable geranylgeranyl transferase type-2 subunit beta (335 aa).

PFTB repeat units lie at residues 74-115 (TEEI…IIFN), 122-163 (ADTI…HLLG), 170-211 (IDSA…AIAG), 218-259 (RDRT…AILG), and 266-312 (SDAM…DDTL). Geranylgeranyl diphosphate is bound by residues 196–198 (HSG) and 238–250 (RPEKLPDVCYSWW). Zn(2+)-binding residues include D244, C246, and H296.

The protein belongs to the protein prenyltransferase subunit beta family. Heterodimer of an alpha and a beta subunit. Zn(2+) serves as cofactor.

It carries out the reaction geranylgeranyl diphosphate + L-cysteinyl-[protein] = S-geranylgeranyl-L-cysteinyl-[protein] + diphosphate. Catalyzes the transfer of a geranyl-geranyl moiety from geranyl-geranyl pyrophosphate to both cysteines in Rab proteins with an -XXCC, -XCXC and -CCXX C-terminal. The chain is Probable geranylgeranyl transferase type-2 subunit beta (ggtb-1) from Caenorhabditis elegans.